The primary structure comprises 109 residues: Set1 complex component sdc1 (109 aa).

The disordered stretch occupies residues 49–109; it reads QQKQKEIVNQ…SSNPGKNSAS (61 aa). Positions 73–87 are enriched in polar residues; that stretch reads STPTMAEQVQTSFSN. Over residues 88 to 101 the composition is skewed to low complexity; sequence PASTPLTQTSSPSS.

This sequence belongs to the dpy-30 family. As to quaternary structure, component of the COMPASS (Set1C) complex composed of ash2, sdc1, set1, shg1, spp1, swd1, swd2 and swd3. Component of the Lid2 complex composed of ash2, jmj3, lid2, sdc1 and snt2.

The protein localises to the nucleus. Functionally, the COMPASS (Set1C) complex specifically mono-, di- and trimethylates histone H3 to form H3K4me1/2/3, which subsequently activates gene expression by regulating transcription elongation and plays a role in telomere length maintenance. The chain is Set1 complex component sdc1 (sdc1) from Schizosaccharomyces pombe (strain 972 / ATCC 24843) (Fission yeast).